A 466-amino-acid chain; its full sequence is 3-isopropylmalate dehydratase large subunit (466 aa).

Residues C345, C405, and C408 each coordinate [4Fe-4S] cluster.

It belongs to the aconitase/IPM isomerase family. LeuC type 1 subfamily. In terms of assembly, heterodimer of LeuC and LeuD. [4Fe-4S] cluster is required as a cofactor.

It catalyses the reaction (2R,3S)-3-isopropylmalate = (2S)-2-isopropylmalate. The protein operates within amino-acid biosynthesis; L-leucine biosynthesis; L-leucine from 3-methyl-2-oxobutanoate: step 2/4. In terms of biological role, catalyzes the isomerization between 2-isopropylmalate and 3-isopropylmalate, via the formation of 2-isopropylmaleate. The polypeptide is 3-isopropylmalate dehydratase large subunit (Microcystis aeruginosa (strain NIES-843 / IAM M-2473)).